Reading from the N-terminus, the 226-residue chain is NEDD8-specific protease 1 (226 aa).

It belongs to the peptidase C48 family.

Processes the pre-form of the ubiquitin-like protein NEDD8/RUB1. Has the capacity to discriminate between NEDD8/RUB1 and ubiquitin. Has no SUMO protease activity. The protein is NEDD8-specific protease 1 (NEDP1) of Arabidopsis thaliana (Mouse-ear cress).